We begin with the raw amino-acid sequence, 311 residues long: Olfactory receptor 8H1 (311 aa).

At 1–25 the chain is on the extracellular side; that stretch reads MGRRNNTNVPDFILTGLSDSEEVQM. Asn-5 is a glycosylation site (N-linked (GlcNAc...) asparagine). Residues 26–46 form a helical membrane-spanning segment; that stretch reads ALFILFLLIYLITMLGNVGMI. At 47–54 the chain is on the cytoplasmic side; the sequence is LIIRLDLQ. The helical transmembrane segment at 55-75 threads the bilayer; that stretch reads LHTPMYFFLTHLSFIDLSYST. Over 76 to 98 the chain is Extracellular; it reads VITPKTLANLLTSNYISFMGCFA. Cys-96 and Cys-188 are joined by a disulfide. A helical transmembrane segment spans residues 99–119; the sequence is QMFFFVFLGAAECFLLSSMAY. Residues 120 to 138 are Cytoplasmic-facing; the sequence is DRYVAICSPLRYPVIMSKR. The chain crosses the membrane as a helical span at residues 139-159; the sequence is LCCALVTGPYVISFINSFVNV. Over 160–196 the chain is Extracellular; it reads VWMSRLHFCDSNVVRHFFCDTSPILALSCMDTYDIEI. A helical membrane pass occupies residues 197–216; it reads MIHILAGSTLMVSLITISAS. Over 217–236 the chain is Cytoplasmic; sequence YVSILSTILKINSTSGKQKA. A helical membrane pass occupies residues 237 to 257; sequence LSTCASHLLGVTIFYGTMIFT. Over 258–270 the chain is Extracellular; that stretch reads YLKPRKSYSLGRD. The helical transmembrane segment at 271-291 threads the bilayer; sequence QVASVFYTIVIPMLNPLIYSL. Residues 292-311 lie on the Cytoplasmic side of the membrane; that stretch reads RNKEVKNALIRVMQRRQDSR.

This sequence belongs to the G-protein coupled receptor 1 family.

It is found in the cell membrane. Functionally, odorant receptor. The polypeptide is Olfactory receptor 8H1 (OR8H1) (Homo sapiens (Human)).